The sequence spans 141 residues: MAKKIVAVIKLALQAGKANPAPPVGPALGQHGVNIMAFCKEYNAKTQDKAGFVIPVEISVFEDRSFTFITKTPPAAVLITKAAGIDKGSGESSKGSVGNISKAQLEEIAKTKLPDLNCSSVESAMKVIEGTARNMGVSITD.

The protein belongs to the universal ribosomal protein uL11 family. In terms of assembly, part of the ribosomal stalk of the 50S ribosomal subunit. Interacts with L10 and the large rRNA to form the base of the stalk. L10 forms an elongated spine to which L12 dimers bind in a sequential fashion forming a multimeric L10(L12)X complex. Post-translationally, one or more lysine residues are methylated.

Its function is as follows. Forms part of the ribosomal stalk which helps the ribosome interact with GTP-bound translation factors. This Prochlorococcus marinus (strain MIT 9312) protein is Large ribosomal subunit protein uL11.